Here is a 344-residue protein sequence, read N- to C-terminus: Tripartite motif-containing protein 44 (344 aa).

Disordered regions lie at residues 1–25 and 68–165; these read MASGVGAAFEELPHDGTCDECEPDE and TPPA…EFDP. The segment covering 75–92 has biased composition (basic and acidic residues); that stretch reads GAGKEEAEVKVEQEREIE. Acidic residues predominate over residues 93–165; sequence SEAGEESESE…ETEAESEFDP (73 aa). Residues 174–215 form a B box-type zinc finger; it reads VAKRKCPDHGLDLSTYCQEDRQLICVLCPVIGAHQGHQLSTL. Positions 179, 182, 201, and 207 each coordinate Zn(2+). A coiled-coil region spans residues 290–325; that stretch reads AHVTEILADIQSHMDRLMTQMAQAKEQLDTSNESAE. A disordered region spans residues 309–344; the sequence is QMAQAKEQLDTSNESAEPKAEGDEEGPSGASEEEDT. Residues 330–344 are compositionally biased toward acidic residues; that stretch reads GDEEGPSGASEEEDT. 2 positions are modified to phosphoserine: serine 336 and serine 339.

In terms of assembly, interacts (via coiled coil) with TRIM17 (via coiled coil).

Its function is as follows. May play a role in the process of differentiation and maturation of neuronal cells. May regulate the activity of TRIM17. Is a negative regulator of PAX6 expression. In Pongo abelii (Sumatran orangutan), this protein is Tripartite motif-containing protein 44 (TRIM44).